The chain runs to 309 residues: Dehydrogenase/reductase SDR family member 7B (309 aa).

At 1–5 (MERAL) the chain is on the cytoplasmic side. The helical; Signal-anchor for type II membrane protein transmembrane segment at 6–26 (GVGIGPLAAGTVGLLILLKVI) threads the bilayer. Residues 27 to 271 (QRLRRRPNIQ…LKAVCQKKKD (245 aa)) are Lumenal-facing. 2 residues coordinate NAD(+): Ser47 and Leu49. Ser179 provides a ligand contact to substrate. Positions 192, 196, and 227 each coordinate NAD(+). Catalysis depends on Tyr192, which acts as the Proton acceptor.

The protein belongs to the short-chain dehydrogenases/reductases (SDR) family.

The protein localises to the endoplasmic reticulum membrane. Functionally, putative oxidoreductase. The sequence is that of Dehydrogenase/reductase SDR family member 7B (dhrs7b) from Danio rerio (Zebrafish).